A 209-amino-acid chain; its full sequence is Uracil phosphoribosyltransferase (209 aa).

5-phospho-alpha-D-ribose 1-diphosphate-binding positions include Arg-77, Arg-102, and 129-137 (DPMLATGSS). Residues Ile-192 and 197 to 199 (GDA) each bind uracil. Residue Asp-198 coordinates 5-phospho-alpha-D-ribose 1-diphosphate.

Belongs to the UPRTase family. Mg(2+) is required as a cofactor.

It catalyses the reaction UMP + diphosphate = 5-phospho-alpha-D-ribose 1-diphosphate + uracil. The protein operates within pyrimidine metabolism; UMP biosynthesis via salvage pathway; UMP from uracil: step 1/1. Allosterically activated by GTP. In terms of biological role, catalyzes the conversion of uracil and 5-phospho-alpha-D-ribose 1-diphosphate (PRPP) to UMP and diphosphate. The chain is Uracil phosphoribosyltransferase from Metamycoplasma hominis (Mycoplasma hominis).